The primary structure comprises 414 residues: 3-oxoacyl-[acyl-carrier-protein] synthase 2 (414 aa).

One can recognise a Ketosynthase family 3 (KS3) domain in the interval 4–411 (NIRVVITGMG…GHNAVLVFKK (408 aa)). Catalysis depends on for beta-ketoacyl synthase activity residues Cys-165, His-304, and His-341.

The protein belongs to the thiolase-like superfamily. Beta-ketoacyl-ACP synthases family.

It catalyses the reaction a fatty acyl-[ACP] + malonyl-[ACP] + H(+) = a 3-oxoacyl-[ACP] + holo-[ACP] + CO2. It carries out the reaction (9Z)-hexadecenoyl-[ACP] + malonyl-[ACP] + H(+) = 3-oxo-(11Z)-octadecenoyl-[ACP] + holo-[ACP] + CO2. It participates in lipid metabolism; fatty acid biosynthesis. Involved in the type II fatty acid elongation cycle. Catalyzes the elongation of a wide range of acyl-ACP by the addition of two carbons from malonyl-ACP to an acyl acceptor. Can efficiently catalyze the conversion of palmitoleoyl-ACP (cis-hexadec-9-enoyl-ACP) to cis-vaccenoyl-ACP (cis-octadec-11-enoyl-ACP), an essential step in the thermal regulation of fatty acid composition. The chain is 3-oxoacyl-[acyl-carrier-protein] synthase 2 (fabF) from Staphylococcus aureus (strain MRSA252).